We begin with the raw amino-acid sequence, 676 residues long: tRNA uridine 5-carboxymethylaminomethyl modification enzyme MnmG (676 aa).

15-20 (GAGHAG) contributes to the FAD binding site. 316–330 (GPRYCPSIEDKIVRF) is a binding site for NAD(+).

This sequence belongs to the MnmG family. Homodimer. Heterotetramer of two MnmE and two MnmG subunits. FAD is required as a cofactor.

It localises to the cytoplasm. Its function is as follows. NAD-binding protein involved in the addition of a carboxymethylaminomethyl (cmnm) group at the wobble position (U34) of certain tRNAs, forming tRNA-cmnm(5)s(2)U34. The sequence is that of tRNA uridine 5-carboxymethylaminomethyl modification enzyme MnmG from Roseiflexus castenholzii (strain DSM 13941 / HLO8).